The primary structure comprises 326 residues: Meso-diaminopimelate D-dehydrogenase (326 aa).

Residues 11–14 (YGNL), 35–37 (TRR), 69–72 (CGGS), 92–94 (SFD), and 121–125 (VGWDP) contribute to the NADP(+) site. Residues Asp-94, Asp-124, Trp-148, 154–155 (QG), Thr-173, Arg-199, His-249, and Asn-276 each bind substrate.

This sequence belongs to the diaminopimelate dehydrogenase family. In terms of assembly, homodimer.

The enzyme catalyses meso-2,6-diaminopimelate + NADP(+) + H2O = (S)-2-amino-6-oxoheptanedioate + NH4(+) + NADPH + H(+). The protein operates within amino-acid biosynthesis; L-lysine biosynthesis via DAP pathway; DL-2,6-diaminopimelate from (S)-tetrahydrodipicolinate: step 1/1. Its activity is regulated as follows. The enzyme is completely inhibited by p-chloromercuribenzoate and HgCl(2) in vitro. Thioglycollate, L-cysteine and Cu(2+) also strongly inhibit the enzyme. Functionally, catalyzes the reversible NADPH-dependent reductive amination of L-2-amino-6-oxopimelate, the acyclic form of L-tetrahydrodipicolinate, to generate the meso compound, D,L-2,6-diaminopimelate. Probably plays a role in lysine biosynthesis. Is highly specific for meso-2,6-diaminopimelate as the electron donor, since the following amino acids are inert for the oxidative deamination reaction: DL-2-aminopimelate, D-glutamate, L-glutamate, D-aspartate, L-aspartate, D-alanine, L-alanine, D-valine, L-valine, D-lysine, L-lysine, D-phenylalanine, L-phenylalanine, D-leucine, L-leucine, D-threonine, L-threonine, D-serine, L-serine, D-tryptophan, L-tryptophan, D-cysteine, L-cysteine, D-histidine, L-histidine, D-methionine, D-arginine, D-proline, D-asparagine, D-glutamine, D-isoleucine and D-ornithine. Moreover, exclusively uses NADP as the electron acceptor for the oxidative deamination of meso-DAP; NAD is inert. This chain is Meso-diaminopimelate D-dehydrogenase (ddh), found in Ureibacillus thermosphaericus.